Consider the following 146-residue polypeptide: MKKQVTIYTDGACSGNPGPGGWGALLMFGSITREVSGSSPATTNNRMELGAAIEALALLKEPCLVDLYSDSSYLVNAINNGWLQRWQRNSWQTAAKKSVENIDLWQKLIKLLKVHEVRFHKVKGHSDNAYNNRCDQLAREAIKKTS.

Residues 1 to 143 (MKKQVTIYTD…CDQLAREAIK (143 aa)) form the RNase H type-1 domain. Mg(2+) is bound by residues Asp-10, Glu-48, Asp-70, and Asp-135.

The protein belongs to the RNase H family. As to quaternary structure, monomer. Requires Mg(2+) as cofactor.

The protein localises to the cytoplasm. It carries out the reaction Endonucleolytic cleavage to 5'-phosphomonoester.. Endonuclease that specifically degrades the RNA of RNA-DNA hybrids. This chain is Ribonuclease H, found in Chlorobium chlorochromatii (strain CaD3).